The primary structure comprises 135 residues: Large ribosomal subunit protein uL16c (135 aa).

A compositionally biased stretch (basic residues) spans 1–17; it reads MLSPKRTRFRKQHRGRM. Residues 1–21 are disordered; that stretch reads MLSPKRTRFRKQHRGRMKGVS.

The protein belongs to the universal ribosomal protein uL16 family. Part of the 50S ribosomal subunit.

The protein localises to the plastid. The protein resides in the chloroplast. The protein is Large ribosomal subunit protein uL16c of Amborella trichopoda.